The following is a 470-amino-acid chain: Tubulin gamma chain (470 aa).

A144–G150 contributes to the GTP binding site.

This sequence belongs to the tubulin family.

The protein localises to the cytoplasm. It localises to the cytoskeleton. The protein resides in the microtubule organizing center. Its subcellular location is the spindle pole body. Its function is as follows. Tubulin is the major constituent of microtubules. The gamma chain is found at microtubule organizing centers (MTOC) such as the spindle poles or the centrosome, suggesting that it is involved in the minus-end nucleation of microtubule assembly. This Eremothecium gossypii (strain ATCC 10895 / CBS 109.51 / FGSC 9923 / NRRL Y-1056) (Yeast) protein is Tubulin gamma chain (TUB4).